Here is a 136-residue protein sequence, read N- to C-terminus: Histone H3.3 type 2 (136 aa).

The disordered stretch occupies residues 1–43 (MARTKQTARKSTGGKAPRKQLATKAARKSAPTTGGVKKPHRYR). N6,N6,N6-trimethyllysine; alternate occurs at positions 5 and 10. K5 and K10 each carry N6,N6-dimethyllysine; alternate. N6-acetyllysine; alternate occurs at positions 5 and 10. K5 is modified (N6-methyllysine; alternate). The residue at position 11 (S11) is a Phosphoserine. 2 positions are modified to N6-acetyllysine: K15 and K24. At K28 the chain carries N6,N6,N6-trimethyllysine; alternate. K28 is subject to N6,N6-dimethyllysine; alternate. K28 is subject to N6-methyllysine; alternate. Residue S29 is modified to Phosphoserine. K37 is subject to N6,N6,N6-trimethyllysine; alternate. N6-methyllysine; alternate is present on K37. K80 carries the N6-methyllysine modification.

Belongs to the histone H3 family. As to quaternary structure, the nucleosome is a histone octamer containing two molecules each of H2A, H2B, H3 and H4 assembled in one H3-H4 heterotetramer and two H2A-H2B heterodimers. The octamer wraps approximately 147 bp of DNA. Acetylation is generally linked to gene activation. In terms of processing, methylation at Lys-5 is linked to gene activation. Methylation at Lys-10 is linked to gene repression. As to expression, highly expressed in nearly all larval and adult nuclei. Expressed only at low levels in intestine. Expressed throughout all stages of gametogenesis.

It localises to the nucleus. Its subcellular location is the chromosome. Functionally, variant histone H3 which replaces conventional H3 in a wide range of nucleosomes in active genes. Constitutes the predominant form of histone H3 in non-dividing cells and is incorporated into chromatin independently of DNA synthesis. Deposited at sites of nucleosomal displacement throughout transcribed genes, suggesting that it represents an epigenetic imprint of transcriptionally active chromatin. Nucleosomes wrap and compact DNA into chromatin, limiting DNA accessibility to the cellular machineries which require DNA as a template. Histones thereby play a central role in transcription regulation, DNA repair, DNA replication and chromosomal stability. DNA accessibility is regulated via a complex set of post-translational modifications of histones, also called histone code, and nucleosome remodeling. This is Histone H3.3 type 2 (his-72) from Caenorhabditis elegans.